The primary structure comprises 135 residues: Fatty acid-binding protein 5 (135 aa).

Residue Ala2 is modified to N-acetylalanine. Lys17 is modified (N6-acetyllysine). Position 22 is a phosphotyrosine; by Tyr-kinases (Tyr22). The Nuclear localization signal motif lies at 24–34 (KEVGVGMALRK). Residues Cys43 and Arg109 each coordinate N-eicosanoyl ethanolamine. Cys120 and Cys127 are joined by a disulfide. Residue 129 to 131 (RVY) coordinates (9Z,12Z)-octadecadienoate. Tyr131 lines the N-eicosanoyl ethanolamine pocket. Tyr131 provides a ligand contact to hexadecanoate. Tyr131 carries the post-translational modification Phosphotyrosine.

The protein belongs to the calycin superfamily. Fatty-acid binding protein (FABP) family. As to quaternary structure, monomer. As to expression, most abundant in lens and retina (found in the mueller cells), moderately abundant in heart and testis (found in the Sertoli cells), and present in very low amounts in lung.

Its subcellular location is the cytoplasm. It localises to the nucleus. It is found in the synapse. The protein localises to the postsynaptic density. The protein resides in the secreted. It catalyses the reaction hexadecanoate(out) = hexadecanoate(in). The enzyme catalyses (9Z,12Z)-octadecadienoate(out) = (9Z,12Z)-octadecadienoate(in). It carries out the reaction (9Z)-octadecenoate(out) = (9Z)-octadecenoate(in). Its function is as follows. Intracellular carrier for long-chain fatty acids and related active lipids, such as endocannabinoids, that regulate the metabolism and actions of the ligands they bind. In addition to the cytosolic transport, selectively delivers specific fatty acids from the cytosol to the nucleus, wherein they activate nuclear receptors. Delivers retinoic acid to the nuclear receptor peroxisome proliferator-activated receptor delta; which promotes proliferation and survival. May also serve as a synaptic carrier of endocannabinoid at central synapses and thus controls retrograde endocannabinoid signaling. Modulates inflammation by regulating PTGES induction via NF-kappa-B activation, and prostaglandin E2 (PGE2) biosynthesis during inflammation. The protein is Fatty acid-binding protein 5 (FABP5) of Bos taurus (Bovine).